A 425-amino-acid polypeptide reads, in one-letter code: UDP-N-acetylglucosamine 1-carboxyvinyltransferase (425 aa).

Residue 22–23 (KN) coordinates phosphoenolpyruvate. A UDP-N-acetyl-alpha-D-glucosamine-binding site is contributed by R98. C122 serves as the catalytic Proton donor. The residue at position 122 (C122) is a 2-(S-cysteinyl)pyruvic acid O-phosphothioketal. UDP-N-acetyl-alpha-D-glucosamine-binding positions include 127–131 (RPVDQ), D313, and I335.

Belongs to the EPSP synthase family. MurA subfamily.

The protein resides in the cytoplasm. It catalyses the reaction phosphoenolpyruvate + UDP-N-acetyl-alpha-D-glucosamine = UDP-N-acetyl-3-O-(1-carboxyvinyl)-alpha-D-glucosamine + phosphate. The protein operates within cell wall biogenesis; peptidoglycan biosynthesis. In terms of biological role, cell wall formation. Adds enolpyruvyl to UDP-N-acetylglucosamine. The polypeptide is UDP-N-acetylglucosamine 1-carboxyvinyltransferase (Xylella fastidiosa (strain M12)).